Reading from the N-terminus, the 360-residue chain is Heme A synthase (360 aa).

The next 8 helical transmembrane spans lie at 29 to 49, 111 to 131, 139 to 159, 175 to 195, 210 to 230, 269 to 289, 309 to 329, and 330 to 350; these read WLFL…ATRL, FLGR…WWTG, LGLV…WIMV, LAAH…LAAG, LTAL…GLVA, VALV…LALL, ALAG…LLAV, and PLWA…MAVA. His-276 provides a ligand contact to heme. His-337 is a binding site for heme.

It belongs to the COX15/CtaA family. Type 2 subfamily. As to quaternary structure, interacts with CtaB. The cofactor is heme b.

The protein resides in the cell membrane. It catalyses the reaction Fe(II)-heme o + 2 A + H2O = Fe(II)-heme a + 2 AH2. Its pathway is porphyrin-containing compound metabolism; heme A biosynthesis; heme A from heme O: step 1/1. In terms of biological role, catalyzes the conversion of heme O to heme A by two successive hydroxylations of the methyl group at C8. The first hydroxylation forms heme I, the second hydroxylation results in an unstable dihydroxymethyl group, which spontaneously dehydrates, resulting in the formyl group of heme A. This chain is Heme A synthase, found in Methylobacterium sp. (strain 4-46).